The chain runs to 73 residues: UPF0352 protein APJL_0577 (73 aa).

This sequence belongs to the UPF0352 family.

The sequence is that of UPF0352 protein APJL_0577 from Actinobacillus pleuropneumoniae serotype 3 (strain JL03).